The chain runs to 532 residues: Putative F-box/LRR-repeat protein At3g42770 (532 aa).

The region spanning 1–46 (MNCLPDELLVQILSFLPTKEATSTSLLSKRWRTLFTLSPNLDFDNS) is the F-box domain. LRR repeat units follow at residues 113–135 (VSEL…IFTS), 279–305 (IRNV…EIPM), and 398–420 (MNDL…SPKL).

In Arabidopsis thaliana (Mouse-ear cress), this protein is Putative F-box/LRR-repeat protein At3g42770.